The sequence spans 307 residues: Elongation factor Ts (307 aa).

The interval 79–82 is involved in Mg(2+) ion dislocation from EF-Tu; that stretch reads TDFV.

The protein belongs to the EF-Ts family.

It localises to the cytoplasm. Functionally, associates with the EF-Tu.GDP complex and induces the exchange of GDP to GTP. It remains bound to the aminoacyl-tRNA.EF-Tu.GTP complex up to the GTP hydrolysis stage on the ribosome. The sequence is that of Elongation factor Ts from Rhizobium meliloti (strain 1021) (Ensifer meliloti).